Reading from the N-terminus, the 150-residue chain is uncharacterized protein (150 aa).

Residues 75 to 150 are disordered; the sequence is RAPQNPPPPG…LLDAVAAAET (76 aa). The span at 86–103 shows a compositional bias: low complexity; the sequence is QRNLPLRRLPALPAAPEA.

This is an uncharacterized protein from Homo sapiens (Human).